The following is a 471-amino-acid chain: Tyrosine--tRNA ligase, mitochondrial (471 aa).

Residue Y71 coordinates L-tyrosine. D75 is an ATP binding site. A 'HIGH' region motif is present at residues 76–85; it reads PTGDSLHVGH. L-tyrosine is bound by residues D115, Y215, Q219, D222, and Q241. Positions 268 and 278 each coordinate ATP. The short motif at 275–279 is the 'KMSKS' region element; it reads KLGKS. N6-acetyllysine occurs at positions 349 and 361.

This sequence belongs to the class-I aminoacyl-tRNA synthetase family. As to quaternary structure, homodimer.

It localises to the mitochondrion matrix. It catalyses the reaction tRNA(Tyr) + L-tyrosine + ATP = L-tyrosyl-tRNA(Tyr) + AMP + diphosphate + H(+). Its function is as follows. Catalyzes the attachment of tyrosine to tRNA(Tyr) in a two-step reaction: tyrosine is first activated by ATP to form Tyr-AMP and then transferred to the acceptor end of tRNA(Tyr). The polypeptide is Tyrosine--tRNA ligase, mitochondrial (Yars2) (Rattus norvegicus (Rat)).